We begin with the raw amino-acid sequence, 763 residues long: Dual specificity tyrosine-phosphorylation-regulated kinase 1A (763 aa).

Ser14 bears the Phosphoserine mark. The segment at 32–57 is disordered; the sequence is GQMPHSHQYSDRRQPNISDQQVSALS. A compositionally biased stretch (polar residues) spans 46-57; it reads PNISDQQVSALS. Tyr111 is subject to Phosphotyrosine; by autocatalysis. The disordered stretch occupies residues 115 to 136; that stretch reads KKRRHQQGQGDDSSHKKERKVY. Residues 117-134 carry the Bipartite nuclear localization signal motif; it reads RRHQQGQGDDSSHKKERK. Tyr140 is modified (phosphotyrosine; by autocatalysis). Tyr145 is modified (phosphotyrosine). Position 159 is a phosphotyrosine; by autocatalysis (Tyr159). The 321-residue stretch at 159 to 479 folds into the Protein kinase domain; the sequence is YEIDSLIGKG…PYYALQHSFF (321 aa). 165 to 173 contributes to the ATP binding site; the sequence is IGKGSFGQV. The residue at position 177 (Tyr177) is a Phosphotyrosine; by autocatalysis. Lys188 lines the ATP pocket. The residue at position 219 (Tyr219) is a Phosphotyrosine; by autocatalysis. 238–241 serves as a coordination point for ATP; that stretch reads FEML. Asp287 (proton acceptor) is an active-site residue. Phosphoserine; by autocatalysis is present on Ser310. 2 positions are modified to phosphotyrosine; by autocatalysis: Tyr319 and Tyr321. Phosphothreonine; by autocatalysis is present on Thr402. The disordered stretch occupies residues 408 to 442; the sequence is TKDGKREYKPPGTRKLHNILGVETGGPGGRRAGES. Tyr449 is modified (phosphotyrosine; by autocatalysis). The span at 485–501 shows a compositional bias: polar residues; sequence EGTNTSNSVSTSPAMEQ. Disordered stretches follow at residues 485-540, 596-679, and 744-763; these read EGTN…HSGG, NALH…GNQA, and DREE…VASS. Over residues 502–525 the composition is skewed to low complexity; the sequence is SQSSGTTSSTSSSSGGSSGTSNSG. Phosphoserine is present on residues Ser529 and Ser538. The tract at residues 595–625 is histidine-rich domain (HRD); that stretch reads QNALHHHHGNSSHHHHHHHHHHHHHGQQALG. Basic residues predominate over residues 598–620; that stretch reads LHHHHGNSSHHHHHHHHHHHHHG. Residues 634–645 are compositionally biased toward polar residues; the sequence is NSPTNSSSTQDS. The segment covering 654-672 has biased composition (low complexity); sequence SMTSLSSSTTSSSTSSSST. Ser748 and Ser758 each carry phosphoserine. A compositionally biased stretch (polar residues) spans 754-763; sequence CVQQSPVASS.

Belongs to the protein kinase superfamily. CMGC Ser/Thr protein kinase family. MNB/DYRK subfamily. As to quaternary structure, interacts with RAD54L2/ARIP4. Interacts with CRY2. Interacts with RANBP9. Interacts with WDR68. Interacts with SIRT1. In terms of assembly, (Microbial infection) Interacts with human adenovirus 5 E1A protein. Autophosphorylated on numerous tyrosine residues. Can also autophosphorylate on serine and threonine residues (in vitro). Ubiquitous. Highest levels in skeletal muscle, testis, fetal lung and fetal kidney.

The protein resides in the nucleus. It is found in the nucleus speckle. The catalysed reaction is L-seryl-[protein] + ATP = O-phospho-L-seryl-[protein] + ADP + H(+). The enzyme catalyses L-threonyl-[protein] + ATP = O-phospho-L-threonyl-[protein] + ADP + H(+). It catalyses the reaction L-tyrosyl-[protein] + ATP = O-phospho-L-tyrosyl-[protein] + ADP + H(+). It carries out the reaction [DNA-directed RNA polymerase] + ATP = phospho-[DNA-directed RNA polymerase] + ADP + H(+). With respect to regulation, inhibited by RANBP9. Inhibited by harmine, leucettamine B and leucettine L41. Functionally, dual-specificity kinase which possesses both serine/threonine and tyrosine kinase activities. Exhibits a substrate preference for proline at position P+1 and arginine at position P-3. Plays an important role in double-strand breaks (DSBs) repair following DNA damage. Mechanistically, phosphorylates RNF169 and increases its ability to block accumulation of TP53BP1 at the DSB sites thereby promoting homologous recombination repair (HRR). Also acts as a positive regulator of transcription by acting as a CTD kinase that mediates phosphorylation of the CTD (C-terminal domain) of the large subunit of RNA polymerase II (RNAP II) POLR2A. May play a role in a signaling pathway regulating nuclear functions of cell proliferation. Modulates alternative splicing by phosphorylating the splice factor SRSF6. Has pro-survival function and negatively regulates the apoptotic process. Promotes cell survival upon genotoxic stress through phosphorylation of SIRT1. This in turn inhibits p53/TP53 activity and apoptosis. Phosphorylates SEPTIN4, SEPTIN5 and SF3B1 at 'Thr-434'. In Homo sapiens (Human), this protein is Dual specificity tyrosine-phosphorylation-regulated kinase 1A.